The following is a 357-amino-acid chain: MEKLLGQAMPLGCIMVDLESTTLQPHEKERLLDPLVAGVILFSRNYESIEQLQALTTEIHQLRHPKLLIAVDHEGGRVQRFKEGFSMLPAMGQLGKCFRANEKEGLELAQQVGWLMATELLAVGVDFSFAPVVDLDYGDSRVIGDRAFDSDPVIVGKLGKALVQGMRDAGMASVAKHFPGHGYIQADTHLEVAVDHREFQEIAHKDIQPFLKLIENGLDAVMPAHVRYPKVDDLPAGFSKVWLQEVLRQQCYFDGAIISDDMSMHAATEFGDAPTRVTAALKAGCDLVLVCNDPVAADEVLSQVTWETGPLSHARLIRLHGKGHLKLSQLHNNPLWQSRASHVSHFLNSVNQQGLLV.

Substrate-binding positions include D72, R80, R146, and 176–177 (KH). Residue H189 is the Proton donor/acceptor of the active site. D260 (nucleophile) is an active-site residue.

This sequence belongs to the glycosyl hydrolase 3 family. NagZ subfamily.

It localises to the cytoplasm. It catalyses the reaction Hydrolysis of terminal non-reducing N-acetyl-D-hexosamine residues in N-acetyl-beta-D-hexosaminides.. It functions in the pathway cell wall biogenesis; peptidoglycan recycling. Its function is as follows. Plays a role in peptidoglycan recycling by cleaving the terminal beta-1,4-linked N-acetylglucosamine (GlcNAc) from peptide-linked peptidoglycan fragments, giving rise to free GlcNAc, anhydro-N-acetylmuramic acid and anhydro-N-acetylmuramic acid-linked peptides. This Hydrogenovibrio crunogenus (strain DSM 25203 / XCL-2) (Thiomicrospira crunogena) protein is Beta-hexosaminidase.